The primary structure comprises 91 residues: DNA-binding protein HU (91 aa).

It belongs to the bacterial histone-like protein family. In terms of assembly, homodimer.

In terms of biological role, histone-like DNA-binding protein which is capable of wrapping DNA to stabilize it, and thus to prevent its denaturation under extreme environmental conditions. This is DNA-binding protein HU (hup) from Streptococcus thermophilus.